The following is a 374-amino-acid chain: uncharacterized protein (374 aa).

The chain crosses the membrane as a helical span at residues A27–Y49.

It localises to the membrane. This is an uncharacterized protein from Methanocaldococcus jannaschii (strain ATCC 43067 / DSM 2661 / JAL-1 / JCM 10045 / NBRC 100440) (Methanococcus jannaschii).